The following is a 351-amino-acid chain: Lipopolysaccharide core biosynthesis mannosyltransferase LpsB (351 aa).

It belongs to the glycosyltransferase group 1 family. Glycosyltransferase 4 subfamily.

It participates in bacterial outer membrane biogenesis; LPS core biosynthesis. In terms of biological role, acts at transfer of mannose group to a 3-deoxy-D-mono octulonic acid (KDO) via an alpha-1,5 linkage. The sequence is that of Lipopolysaccharide core biosynthesis mannosyltransferase LpsB (lpsB) from Rhizobium meliloti (strain 1021) (Ensifer meliloti).